Consider the following 414-residue polypeptide: METRNRTIHLTDAIWTEILARLPLRIIARFKSVSKTWKSTIESVYFRRLFVSVHRKSSTSWSLMWYGQKDLVGFHGCETWGLPKSLSFYIPSSLCIIEGSSHGLVLISENDDDCCFVGNPVLQQWIKIPPPPVHSSVFGLVSRVDDDGFVLGFKVVKLAEVIVTNNYVSCSLSVFVYSSETGIWTCKTIHCPYQITNFGSFTLDGTIYFDHLSEPGVLVAYDFYSEISDQFWVIPLPDHPNHGFNSDFKGALTTSQGFVMYIRTLAQSSSNVFKAWRLNNDSTWQLLWKIGLPSLIGDYVPMAMHPFDSDIVHLWSQDHRHVVSWNLRTQKNRILGAEDNDEDHKDCYLNQPVCEECMDEICGCKASVRLLQLVLPRWMESVPCPPQVEMMNTASVISYVTSMQETMIRNWLHQ.

In terms of domain architecture, F-box spans 5–52; the sequence is NRTIHLTDAIWTEILARLPLRIIARFKSVSKTWKSTIESVYFRRLFVS.

This is F-box protein At3g26010 from Arabidopsis thaliana (Mouse-ear cress).